Here is an 84-residue protein sequence, read N- to C-terminus: Small ribosomal subunit protein bS16 (84 aa).

It belongs to the bacterial ribosomal protein bS16 family.

The sequence is that of Small ribosomal subunit protein bS16 from Burkholderia ambifaria (strain MC40-6).